Here is a 476-residue protein sequence, read N- to C-terminus: MVAVPTSMASLQAPPQYVVADIDLADFGRKELSIAETEMPGLMALRVKHGSEKPLKGARIAGSLHMTIQTGVLIETLVALGADVRWASCNIFSTQDHAAAAIAASGVPVFATKGETLDEYWAYTHRILEWGDGGTPNMILDDGGDATGLVMLGSKAESDSSVLDNPGNEEETALFASIRTKLAQDSSFYSRIKSNIQGVTEETTTGVARLYQMQKSGELPFPAINVNDSVTKSKFDNLYGCRESLVDGIKRATDVMVAGKVALVMGYGDVGKGSAQSLRGLGATVMIAEIDPICALQAAMEGYRVVRLDEVVQDVDIFVTSTGNFQVIRHEHLIRMKDEAIVCNIGHFDNEIDVASLKDYSWENIKPQVDHITLPSGNKIILLAEGRLVNLGCATGHPSFVMSNSFTNQVLAQIELFSKGDKYADQVYVLPKHLDEMVARLHLEKIGARLTELTKQQADYISVPIEGPYKPDHYRY.

Thr67, Asp142, and Glu202 together coordinate substrate. 203–205 (TTT) contributes to the NAD(+) binding site. Substrate is bound by residues Lys232 and Asp236. NAD(+)-binding positions include Asn237, 266–271 (GYGDVG), Glu289, Asn324, 345–347 (IGH), and Asn390.

This sequence belongs to the adenosylhomocysteinase family. NAD(+) serves as cofactor.

It is found in the cytoplasm. It catalyses the reaction S-adenosyl-L-homocysteine + H2O = L-homocysteine + adenosine. The protein operates within amino-acid biosynthesis; L-homocysteine biosynthesis; L-homocysteine from S-adenosyl-L-homocysteine: step 1/1. Functionally, may play a key role in the regulation of the intracellular concentration of adenosylhomocysteine. This chain is Adenosylhomocysteinase, found in Prochlorococcus marinus (strain MIT 9303).